The chain runs to 352 residues: Heat-inducible transcription repressor HrcA (352 aa).

It belongs to the HrcA family.

Negative regulator of class I heat shock genes (grpE-dnaK-dnaJ and groELS operons). Prevents heat-shock induction of these operons. This Prochlorococcus marinus (strain MIT 9313) protein is Heat-inducible transcription repressor HrcA.